A 603-amino-acid polypeptide reads, in one-letter code: Threonine--tRNA ligase (603 aa).

Residues 209 to 500 (DHRKLGNEMK…LIEHCAGELP (292 aa)) form a catalytic region. Positions 301, 352, and 477 each coordinate Zn(2+).

It belongs to the class-II aminoacyl-tRNA synthetase family. As to quaternary structure, homodimer. The cofactor is Zn(2+).

The protein localises to the cytoplasm. It catalyses the reaction tRNA(Thr) + L-threonine + ATP = L-threonyl-tRNA(Thr) + AMP + diphosphate + H(+). Functionally, catalyzes the attachment of threonine to tRNA(Thr) in a two-step reaction: L-threonine is first activated by ATP to form Thr-AMP and then transferred to the acceptor end of tRNA(Thr). Also edits incorrectly charged L-seryl-tRNA(Thr). This is Threonine--tRNA ligase from Campylobacter lari (strain RM2100 / D67 / ATCC BAA-1060).